The primary structure comprises 231 residues: Ribosyldihydronicotinamide dehydrogenase [quinone] (231 aa).

FAD-binding positions include His12 and 18–21; that span reads FNGS. Ser80 is subject to Phosphoserine. 104 to 107 contacts FAD; the sequence is LYWF. Substrate is bound at residue 127–129; the sequence is FDI. FAD-binding positions include 148–151 and Tyr156; that span reads TTGG. Zn(2+)-binding residues include His174 and His178. Glu194 contributes to the FAD binding site. The residue at position 197 (Ser197) is a Phosphoserine. Arg201 is a binding site for FAD. Cys223 serves as a coordination point for Zn(2+).

The protein belongs to the NAD(P)H dehydrogenase (quinone) family. As to quaternary structure, homodimer. Zn(2+) is required as a cofactor. It depends on FAD as a cofactor.

The protein localises to the cytoplasm. The catalysed reaction is 1-(beta-D-ribofuranosyl)-1,4-dihydronicotinamide + a quinone + H(+) = beta-nicotinamide D-riboside + a quinol. In terms of biological role, the enzyme apparently serves as a quinone reductase in connection with conjugation reactions of hydroquinones involved in detoxification pathways as well as in biosynthetic processes such as the vitamin K-dependent gamma-carboxylation of glutamate residues in prothrombin synthesis. In Pongo abelii (Sumatran orangutan), this protein is Ribosyldihydronicotinamide dehydrogenase [quinone] (NQO2).